The chain runs to 564 residues: 60 kDa lysophospholipase (564 aa).

The Asparaginase/glutaminase domain maps to 9–355 (RRLLAIYTGG…NDRKKLLAKD (347 aa)). Thr19 (acyl-ester intermediate) is an active-site residue. The tract at residues 41-350 (TLHMFHDEEY…PGLSLNDRKK (310 aa)) is asparaginase. Substrate-binding positions include 84–86 (DSS) and 116–117 (TD). 5 ANK repeats span residues 141–170 (GAQV…YVIP), 396–426 (VLLP…DLNL), 430–459 (SGQT…DVDA), 463–492 (DGQS…RLSP), and 530–559 (DGHC…SVCA). The residue at position 478 (Ser478) is a Phosphoserine.

It in the N-terminal section; belongs to the asparaginase 1 family. As to quaternary structure, monomer.

It catalyses the reaction a 1-acyl-sn-glycero-3-phosphocholine + H2O = sn-glycerol 3-phosphocholine + a fatty acid + H(+). The catalysed reaction is L-asparagine + H2O = L-aspartate + NH4(+). The enzyme catalyses a 1-O-alkyl-2-acetyl-sn-glycero-3-phosphocholine + H2O = a 1-O-alkyl-sn-glycero-3-phosphocholine + acetate + H(+). It carries out the reaction 1-hexadecanoyl-sn-glycero-3-phosphocholine + H2O = sn-glycerol 3-phosphocholine + hexadecanoate + H(+). It catalyses the reaction 2 1-hexadecanoyl-sn-glycero-3-phosphocholine = 1,2-dihexadecanoyl-sn-glycero-3-phosphocholine + sn-glycerol 3-phosphocholine. The catalysed reaction is 1-octadecanoyl-sn-glycero-3-phosphocholine + H2O = octadecanoate + sn-glycerol 3-phosphocholine + H(+). The enzyme catalyses 1-(9Z-octadecenoyl)-sn-glycero-3-phosphocholine + H2O = sn-glycerol 3-phosphocholine + (9Z)-octadecenoate + H(+). It carries out the reaction 1-hexadecanoyl-sn-glycero-3-phosphoethanolamine + H2O = sn-glycero-3-phosphoethanolamine + hexadecanoate + H(+). It catalyses the reaction 1-(9Z-octadecenoyl)-sn-glycero-3-phosphoethanolamine + H2O = sn-glycero-3-phosphoethanolamine + (9Z)-octadecenoate + H(+). The catalysed reaction is 1-hexadecanoyl-sn-glycero-3-phosphoethanolamine + 1-hexadecanoyl-sn-glycero-3-phosphocholine = 1,2-dihexadecanoyl-sn-glycero-3-phosphoethanolamine + sn-glycerol 3-phosphocholine. The enzyme catalyses 2-(5Z,8Z,11Z,14Z)-eicosatetraenoyl-sn-glycero-3-phosphocholine + H2O = sn-glycerol 3-phosphocholine + (5Z,8Z,11Z,14Z)-eicosatetraenoate + H(+). It carries out the reaction 2-hexadecanoyl-sn-glycero-3-phosphocholine + H2O = sn-glycerol 3-phosphocholine + hexadecanoate + H(+). It catalyses the reaction 2 2-hexadecanoyl-sn-glycero-3-phosphocholine = 1,2-dihexadecanoyl-sn-glycero-3-phosphocholine + sn-glycerol 3-phosphocholine. The catalysed reaction is 1-O-(9Z)-octadecenoyl-2-O-acetyl-sn-glycero-3-phosphocholine + H2O = 2-acetyl-sn-glycero-3-phosphocholine + (9Z)-octadecenoate + H(+). The enzyme catalyses a 1-acyl-sn-glycero-3-phospho-(1D-myo-inositol) + 1-hexadecanoyl-sn-glycero-3-phosphocholine = a 1-acyl-2-hexadecanoyl-sn-glycero-3-phospho-(1D-myo-inositol) + sn-glycerol 3-phosphocholine. It carries out the reaction 2 2-(5Z,8Z,11Z,14Z)-eicosatetraenoyl-sn-glycero-3-phosphocholine = 1,2-di-(5Z,8Z,11Z,14Z-eicosatetraenoyl)-sn-glycero-3-phosphocholine + sn-glycerol 3-phosphocholine. Functionally, exhibits lysophospholipase, transacylase, PAF acetylhydrolase and asparaginase activities. Can catalyze three types of transacylation reactions: (1) acyl transfer from 1-acyl-sn-glycero-3-phosphocholine (1-acyl-GPC) to the sn-1(3) positions of glycerol and 2-acylglycerol (sn-1 to -1(3) transfer), (2) acyl transfer from 1-acyl-GPC to the sn-2 positions of 1-acyl-GPC, 1-acyl-sn-glycero-3-phosphoethanolamine (1-acyl-GPE), and other lysophospholipids (sn-1 to -2 transfer) and (3) acyl transfer from 2-acyl-GPC to the sn-1 position of 2-acyl-GPC and 2-acyl-GPE (sn-2 to -1 transfer). Mediates the synthesis of 1-arachidonoyl species of phospholipids by transferring the arachidonoyl residue from 2-arachidonoyl lysophospholipid to the sn-1 position of 2-acyl lysophospholipid. The chain is 60 kDa lysophospholipase (Aspg) from Mus musculus (Mouse).